The chain runs to 559 residues: Germacrene A synthase 1 (559 aa).

Mg(2+) contacts are provided by Asp-312, Asp-316, Asp-456, Thr-460, and Glu-464. The DDXXD motif signature appears at 312-316 (DDTYD).

It belongs to the terpene synthase family. In terms of assembly, monomer. Mg(2+) serves as cofactor. In terms of tissue distribution, mainly expressed in sunflower trichomes.

The catalysed reaction is (2E,6E)-farnesyl diphosphate = (+)-(R)-germacrene A + diphosphate. It participates in secondary metabolite biosynthesis; terpenoid biosynthesis. In terms of biological role, sesquiterpene synthase involved in germacrene A biosynthesis. Germacrene A is a precursor of several sesquiterpene lactones. The protein is Germacrene A synthase 1 of Helianthus annuus (Common sunflower).